Reading from the N-terminus, the 242-residue chain is Probable transcriptional regulatory protein LBA0733 (242 aa).

The tract at residues 1 to 22 (MSGHSKWHNIQGRKNAQDAKRG) is disordered.

The protein belongs to the TACO1 family.

Its subcellular location is the cytoplasm. The protein is Probable transcriptional regulatory protein LBA0733 of Lactobacillus acidophilus (strain ATCC 700396 / NCK56 / N2 / NCFM).